The chain runs to 412 residues: [Pyruvate dehydrogenase (acetyl-transferring)] kinase isozyme 4, mitochondrial (412 aa).

A Histidine kinase domain is found at 138 to 368 (IIEYKDSCTV…DAIIYLKALS (231 aa)). Residues 254–261 (ELFKNAMR), aspartate 293, 312–313 (ST), and 329–334 (GFGYGL) each bind ATP.

It belongs to the PDK/BCKDK protein kinase family. In terms of assembly, homodimer. Interacts with the pyruvate dehydrogenase complex subunit DLAT, and is part of the multimeric pyruvate dehydrogenase complex that contains multiple copies of pyruvate dehydrogenase (E1), dihydrolipoamide acetyltransferase (DLAT, E2) and lipoamide dehydrogenase (DLD, E3). As to expression, detected in heart, white adipose tissue and muscle.

The protein resides in the mitochondrion matrix. It carries out the reaction L-seryl-[pyruvate dehydrogenase E1 alpha subunit] + ATP = O-phospho-L-seryl-[pyruvate dehydrogenase E1 alpha subunit] + ADP + H(+). Functionally, kinase that plays a key role in regulation of glucose and fatty acid metabolism and homeostasis via phosphorylation of the pyruvate dehydrogenase subunits PDHA1 and PDHA2. This inhibits pyruvate dehydrogenase activity, and thereby regulates metabolite flux through the tricarboxylic acid cycle, down-regulates aerobic respiration and inhibits the formation of acetyl-coenzyme A from pyruvate. Inhibition of pyruvate dehydrogenase decreases glucose utilization and increases fat metabolism in response to prolonged fasting and starvation. Plays an important role in maintaining normal blood glucose levels under starvation, and is involved in the insulin signaling cascade. Via its regulation of pyruvate dehydrogenase activity, plays an important role in maintaining normal blood pH and in preventing the accumulation of ketone bodies under starvation. In the fed state, mediates cellular responses to glucose levels and to a high-fat diet. Regulates both fatty acid oxidation and de novo fatty acid biosynthesis. Plays a role in the generation of reactive oxygen species. Protects detached epithelial cells against anoikis. Plays a role in cell proliferation via its role in regulating carbohydrate and fatty acid metabolism. This chain is [Pyruvate dehydrogenase (acetyl-transferring)] kinase isozyme 4, mitochondrial (PDK4), found in Rhinolophus ferrumequinum (Greater horseshoe bat).